The primary structure comprises 162 residues: Heat shock protein beta-6 (162 aa).

Positions 1–72 (MEIPVPVQPS…PTAQVSTDSG (72 aa)) are involved in stabilization of the HSPB1:HSBP6 heterodimer. A Phosphoserine modification is found at Ser-16. In terms of domain architecture, sHSP spans 56 to 162 (RAPSVALPTA…AQLPSPPAAK (107 aa)). Position 66 is a deamidated glutamine (Gln-66). Ser-157 bears the Phosphoserine mark.

The protein belongs to the small heat shock protein (HSP20) family. In terms of assembly, homodimer. Small heat shock proteins form high molecular mass oligomers containing variable number of monomers; these oligomers display a very flexible quaternary structure easily exchanging their subunits. Heterooligomer with HSPB1; formed through oligomerization of HSPB1:HSBP6 dimers; subunit exchange leads to formation of at least two different heterooligomeric complexes, differing in variable quantities of HSPB1 and HSPB6 homodimers in addition to HSPB1:HSPB6 heterodimers. Heterooligomer with CRYAB; large heterooligomers consist of CRYAB homodimers and HSPB5:HSPB6 heterodimers but lacking HSPB6 homodimers. Interacts with BAG3. Interacts (phosphorylated) with YWHAZ. Interacts with PDE4A and PDE4D; required for maintenance of the non-phosphorylated state of HSPB6 under basal conditions. Interacts with KDR. Interacts with PRKD1. Post-translationally, phosphorylated at Ser-16 by PKA and probably PKD1K; required to protect cardiomyocytes from apoptosis.

The protein localises to the cytoplasm. It is found in the nucleus. The protein resides in the secreted. In terms of biological role, small heat shock protein which functions as a molecular chaperone probably maintaining denatured proteins in a folding-competent state. Seems to have versatile functions in various biological processes. Plays a role in regulating muscle function such as smooth muscle vasorelaxation and cardiac myocyte contractility. May regulate myocardial angiogenesis implicating KDR. Overexpression mediates cardioprotection and angiogenesis after induced damage. Stabilizes monomeric YWHAZ thereby supporting YWHAZ chaperone-like activity. The protein is Heat shock protein beta-6 (Hspb6) of Mus musculus (Mouse).